A 715-amino-acid chain; its full sequence is NADH-ubiquinone oxidoreductase chain 5 (715 aa).

A run of 17 helical transmembrane segments spans residues methionine 1 to arginine 21, leucine 30 to valine 50, leucine 81 to isoleucine 101, leucine 119 to glycine 139, tryptophan 140 to alanine 160, phenylalanine 177 to valine 197, leucine 200 to alanine 220, threonine 241 to methionine 261, leucine 274 to phenylalanine 294, leucine 310 to isoleucine 330, asparagine 331 to alanine 351, leucine 366 to methionine 386, phenylalanine 403 to leucine 423, glycine 487 to isoleucine 507, threonine 543 to leucine 563, isoleucine 647 to isoleucine 667, and serine 668 to threonine 688.

It belongs to the complex I subunit 5 family.

It is found in the mitochondrion inner membrane. It carries out the reaction a ubiquinone + NADH + 5 H(+)(in) = a ubiquinol + NAD(+) + 4 H(+)(out). Core subunit of the mitochondrial membrane respiratory chain NADH dehydrogenase (Complex I) that is believed to belong to the minimal assembly required for catalysis. Complex I functions in the transfer of electrons from NADH to the respiratory chain. The immediate electron acceptor for the enzyme is believed to be ubiquinone. In Neurospora crassa (strain ATCC 24698 / 74-OR23-1A / CBS 708.71 / DSM 1257 / FGSC 987), this protein is NADH-ubiquinone oxidoreductase chain 5 (ndh-5).